Consider the following 101-residue polypeptide: Small ribosomal subunit protein uS14 (101 aa).

This sequence belongs to the universal ribosomal protein uS14 family. In terms of assembly, part of the 30S ribosomal subunit. Contacts proteins S3 and S10.

Its function is as follows. Binds 16S rRNA, required for the assembly of 30S particles and may also be responsible for determining the conformation of the 16S rRNA at the A site. This chain is Small ribosomal subunit protein uS14, found in Alteromonas mediterranea (strain DSM 17117 / CIP 110805 / LMG 28347 / Deep ecotype).